Consider the following 200-residue polypeptide: Pyridoxal 5'-phosphate synthase subunit PdxT (200 aa).

L-glutamine is bound at residue 52–54 (GES). The active-site Nucleophile is Cys-84. L-glutamine is bound by residues Arg-116 and 145–146 (IR). Active-site charge relay system residues include His-181 and Glu-183.

This sequence belongs to the glutaminase PdxT/SNO family. As to quaternary structure, in the presence of PdxS, forms a dodecamer of heterodimers. Only shows activity in the heterodimer.

The catalysed reaction is aldehydo-D-ribose 5-phosphate + D-glyceraldehyde 3-phosphate + L-glutamine = pyridoxal 5'-phosphate + L-glutamate + phosphate + 3 H2O + H(+). The enzyme catalyses L-glutamine + H2O = L-glutamate + NH4(+). It functions in the pathway cofactor biosynthesis; pyridoxal 5'-phosphate biosynthesis. Its function is as follows. Catalyzes the hydrolysis of glutamine to glutamate and ammonia as part of the biosynthesis of pyridoxal 5'-phosphate. The resulting ammonia molecule is channeled to the active site of PdxS. In Saccharolobus islandicus (strain Y.N.15.51 / Yellowstone #2) (Sulfolobus islandicus), this protein is Pyridoxal 5'-phosphate synthase subunit PdxT.